A 305-amino-acid polypeptide reads, in one-letter code: Homoserine O-acetyltransferase (305 aa).

Cysteine 142 (acyl-thioester intermediate) is an active-site residue. Lysine 163 and serine 192 together coordinate substrate. Histidine 235 serves as the catalytic Proton acceptor. Residue glutamate 237 is part of the active site. Residue arginine 249 coordinates substrate.

It belongs to the MetA family.

It is found in the cytoplasm. The catalysed reaction is L-homoserine + acetyl-CoA = O-acetyl-L-homoserine + CoA. Its pathway is amino-acid biosynthesis; L-methionine biosynthesis via de novo pathway; O-acetyl-L-homoserine from L-homoserine: step 1/1. In terms of biological role, transfers an acetyl group from acetyl-CoA to L-homoserine, forming acetyl-L-homoserine. This Acetivibrio thermocellus (strain ATCC 27405 / DSM 1237 / JCM 9322 / NBRC 103400 / NCIMB 10682 / NRRL B-4536 / VPI 7372) (Clostridium thermocellum) protein is Homoserine O-acetyltransferase.